A 33-amino-acid chain; its full sequence is Dermaseptin-4 (33 aa).

At leucine 33 the chain carries Leucine amide.

In terms of tissue distribution, expressed by the skin glands.

It is found in the secreted. In terms of biological role, has antiparasitic activity against trypomastigote form of T.cruzi (IC(50)=0.25 uM) in vitro but not against L.infantum. Probably acts by permeabilizing cell membranes. In vitro, shows no cytotoxicity against macrophages. Has antibacterial activity. This chain is Dermaseptin-4, found in Pithecopus nordestinus (Northeastern Brazilian leaf frog).